Reading from the N-terminus, the 260-residue chain is Snake venom serine protease homolog 2A (260 aa).

Positions 1-18 (MVLIRVLANLLILQLSYA) are cleaved as a signal peptide. Positions 19–24 (QKSSEL) are excised as a propeptide. In terms of domain architecture, Peptidase S1 spans 25–251 (IIGGDECNIN…HLDWIKSIIA (227 aa)). 6 cysteine pairs are disulfide-bonded: Cys-31–Cys-165, Cys-52–Cys-68, Cys-100–Cys-258, Cys-144–Cys-212, Cys-176–Cys-191, and Cys-202–Cys-227. N-linked (GlcNAc...) asparagine glycans are attached at residues Asn-83, Asn-123, and Asn-124.

This sequence belongs to the peptidase S1 family. Snake venom subfamily. In terms of tissue distribution, expressed by the venom gland.

It localises to the secreted. Snake venom serine protease homolog that may act in the hemostasis system of the prey. The polypeptide is Snake venom serine protease homolog 2A (TLG2A) (Craspedocephalus gramineus (Bamboo pit viper)).